A 355-amino-acid polypeptide reads, in one-letter code: SH3 domain-containing protein Dlish (355 aa).

3 SH3 domains span residues 57–117 (SPDS…PCNT), 183–243 (EPSG…PADS), and 287–352 (YHGT…PPAM).

Interacts with dachs (via C-terminus); the interaction is direct. Interacts (via N-terminus including SH3 domain 1) with palmitoyltransferase app; this leads to palmitoylation of Dlish by app. Also interacts with dco, ft, ft-regulated E3 ubiquitin ligase Fbxl7, F-box protein slmb and SCF E3 ubiquitin-protein ligase complex component Cul1. Post-translationally, palmitoylated by app.

The protein resides in the cytoplasm. Its subcellular location is the cell cortex. In terms of biological role, required for the apical cell cortex localization, total cellular level and full activity of dachs. In Drosophila melanogaster (Fruit fly), this protein is SH3 domain-containing protein Dlish.